We begin with the raw amino-acid sequence, 25 residues long: Caerin-1.10 (25 aa).

Leucine 25 bears the Leucine amide mark.

This sequence belongs to the frog skin active peptide (FSAP) family. Caerin subfamily. Expressed by the skin dorsal glands.

It localises to the secreted. Functionally, antibacterial peptide with wide spectrum of activity. The sequence is that of Caerin-1.10 from Litoria rothii (Roth's tree frog).